We begin with the raw amino-acid sequence, 546 residues long: Probable protein kinase UbiB (546 aa).

A Protein kinase domain is found at 124–502 (DFDIKPLASA…HVRQGQSRYL (379 aa)). ATP-binding positions include 130–138 (LASASIAQV) and Lys-153. Asp-288 (proton acceptor) is an active-site residue. The next 2 membrane-spanning stretches (helical) occupy residues 501-521 (YLLG…VSRP) and 522-542 (EWGL…FVGW).

Belongs to the ABC1 family. UbiB subfamily.

It localises to the cell inner membrane. It functions in the pathway cofactor biosynthesis; ubiquinone biosynthesis [regulation]. In terms of biological role, is probably a protein kinase regulator of UbiI activity which is involved in aerobic coenzyme Q (ubiquinone) biosynthesis. This Escherichia fergusonii (strain ATCC 35469 / DSM 13698 / CCUG 18766 / IAM 14443 / JCM 21226 / LMG 7866 / NBRC 102419 / NCTC 12128 / CDC 0568-73) protein is Probable protein kinase UbiB.